The primary structure comprises 469 residues: UDP-N-acetylmuramate--L-alanine ligase (469 aa).

Residue 122-128 (GTHGKTT) participates in ATP binding.

This sequence belongs to the MurCDEF family.

It is found in the cytoplasm. It catalyses the reaction UDP-N-acetyl-alpha-D-muramate + L-alanine + ATP = UDP-N-acetyl-alpha-D-muramoyl-L-alanine + ADP + phosphate + H(+). The protein operates within cell wall biogenesis; peptidoglycan biosynthesis. Cell wall formation. The polypeptide is UDP-N-acetylmuramate--L-alanine ligase (Legionella pneumophila (strain Paris)).